The primary structure comprises 408 residues: Guanine nucleotide-binding protein alpha-14 subunit (408 aa).

Residues 39–46 (HSEELEAK), 79–86 (GGPLSGKS), 201–205 (TRIAD), 216–222 (VHSRKAT), 241–245 (DVGGQ), 285–288 (FPKF), 325–328 (NKVD), and Ala-380 contribute to the GTP site. Positions 71-408 (SHIKILILGG…KANAKATGLS (338 aa)) constitute a G-alpha domain. The segment at 74 to 87 (KILILGGPLSGKST) is G1 motif. Ser-86 serves as a coordination point for Mg(2+). Residues 214–222 (DIVHSRKAT) are G2 motif. Thr-222 is a Mg(2+) binding site. The G3 motif stretch occupies residues 237–246 (LLMIDVGGQR). The G4 motif stretch occupies residues 321–328 (LLFFNKVD). Positions 378–383 (TTATNT) are G5 motif.

This sequence belongs to the G-alpha family. G proteins are composed of 3 units; alpha, beta and gamma. The alpha chain contains the guanine nucleotide binding site. Interacts with the dopamine receptor dop-2 (via C-terminus); the interaction is direct.

Its function is as follows. Guanine nucleotide-binding proteins (G proteins) are involved as modulators or transducers in various transmembrane signaling systems. In association with the G-protein coupled dopamine receptor dop-2, modulates two types of learning: touch habituation and chemosensory associative conditioning. The chain is Guanine nucleotide-binding protein alpha-14 subunit from Caenorhabditis elegans.